A 356-amino-acid polypeptide reads, in one-letter code: Dihydroorotate dehydrogenase (quinone) (356 aa).

Residues 60–64 (AGFDK) and S84 each bind FMN. Residue K64 participates in substrate binding. A substrate-binding site is contributed by 109-113 (NRFGF). 2 residues coordinate FMN: N140 and N171. A substrate-binding site is contributed by N171. Catalysis depends on S174, which acts as the Nucleophile. Position 176 (N176) interacts with substrate. Positions 216 and 244 each coordinate FMN. 245–246 (NT) is a substrate binding site. FMN is bound by residues G267, G296, and 317–318 (YS).

Belongs to the dihydroorotate dehydrogenase family. Type 2 subfamily. As to quaternary structure, monomer. Requires FMN as cofactor.

The protein resides in the cell membrane. It catalyses the reaction (S)-dihydroorotate + a quinone = orotate + a quinol. Its pathway is pyrimidine metabolism; UMP biosynthesis via de novo pathway; orotate from (S)-dihydroorotate (quinone route): step 1/1. Its function is as follows. Catalyzes the conversion of dihydroorotate to orotate with quinone as electron acceptor. The polypeptide is Dihydroorotate dehydrogenase (quinone) (Azorhizobium caulinodans (strain ATCC 43989 / DSM 5975 / JCM 20966 / LMG 6465 / NBRC 14845 / NCIMB 13405 / ORS 571)).